Reading from the N-terminus, the 909-residue chain is Yellow mounds protein A (909 aa).

An MIF4G domain is found at 7-283; that stretch reads LNVVSRILNK…KNLFELKNNK (277 aa). Disordered stretches follow at residues 178-232, 415-439, 460-537, 627-689, and 704-774; these read SMGG…NNNI, MESS…SGIK, INLP…SSAP, VPPV…SEAR, and SLSG…AKKH. A compositionally biased stretch (acidic residues) spans 204-215; that stretch reads DDDDHDEEDNEN. 2 stretches are compositionally biased toward low complexity: residues 216 to 231 and 417 to 436; these read NYEN…NNNN and SSSN…SSSS. Polar residues predominate over residues 473 to 490; sequence RSNSPSLSSVVKQPQSQQ. Residues 491–525 show a composition bias toward low complexity; sequence NNNNNNNNNNNNTTITTTTSSNNNINNNNNNNNNN. The segment covering 721 to 738 has biased composition (polar residues); sequence STPTLKSTPAIVQNGGSI. The span at 739-756 shows a compositional bias: low complexity; sequence TSTSSSSSSSSSSSSSTT. The stretch at 845-877 forms a coiled coil; that stretch reads TMLFDLEEMAQEQQNLEKQNDQQQNLLTQNNQI.

Plays as essential role in regulating terminal differentiation. The sequence is that of Yellow mounds protein A (yelA) from Dictyostelium discoideum (Social amoeba).